A 381-amino-acid chain; its full sequence is Bifunctional polyhydroxybutyrate synthase / ABC transporter periplasmic binding protein (381 aa).

A signal peptide spans 1 to 22 (MSKTFARSSLCALSMTIMTAHA).

The protein belongs to the bacterial solute-binding protein PotD/PotF family.

It localises to the periplasm. It catalyses the reaction (3R)-3-hydroxybutanoyl-CoA + [(3R)-hydroxybutanoate](n) = [(3R)-hydroxybutanoate](n+1) + CoA. Its function is as follows. Catalyzes the formation of short polymers of R-3-hydroxybutyrate (cPHB). Involved in natural transformation. Probably part of the ABC transporter complex YdcSTUV. During natural transformation, may bind dsDNA and convey it to the inner membrane channel formed by YdcV. This is Bifunctional polyhydroxybutyrate synthase / ABC transporter periplasmic binding protein (ydcS) from Escherichia coli (strain K12).